The chain runs to 84 residues: METVITATIIGASILLAFAALGTAIGFAILGGKFLESSARQPELASSLQTKMFIVAGLLDAIAMIAVGISLLFIFANPFIGLLN.

The next 2 helical transmembrane spans lie at isoleucine 9–isoleucine 29 and isoleucine 54–isoleucine 74.

Belongs to the ATPase C chain family. F-type ATPases have 2 components, F(1) - the catalytic core - and F(0) - the membrane proton channel. F(1) has five subunits: alpha(3), beta(3), gamma(1), delta(1), epsilon(1). F(0) has three main subunits: a(1), b(2) and c(10-14). The alpha and beta chains form an alternating ring which encloses part of the gamma chain. F(1) is attached to F(0) by a central stalk formed by the gamma and epsilon chains, while a peripheral stalk is formed by the delta and b chains.

It localises to the cell inner membrane. In terms of biological role, f(1)F(0) ATP synthase produces ATP from ADP in the presence of a proton or sodium gradient. F-type ATPases consist of two structural domains, F(1) containing the extramembraneous catalytic core and F(0) containing the membrane proton channel, linked together by a central stalk and a peripheral stalk. During catalysis, ATP synthesis in the catalytic domain of F(1) is coupled via a rotary mechanism of the central stalk subunits to proton translocation. Functionally, key component of the F(0) channel; it plays a direct role in translocation across the membrane. A homomeric c-ring of between 10-14 subunits forms the central stalk rotor element with the F(1) delta and epsilon subunits. The polypeptide is ATP synthase subunit c (Haemophilus influenzae (strain ATCC 51907 / DSM 11121 / KW20 / Rd)).